The following is a 298-amino-acid chain: CD-NTase-associated protein 6 (298 aa).

ATP is bound by residues Gly80–Ala85 and Arg204–Arg205.

The protein belongs to the AAA ATPase family. As to quaternary structure, homohexamer, forms a 1:1:6 CdnC:Cap7:Cap6 complex.

Functionally, regulates complex assembly in a CBASS antivirus system. CBASS (cyclic oligonucleotide-based antiphage signaling system) provides immunity against bacteriophage. The CD-NTase protein synthesizes cyclic nucleotides in response to infection; these serve as specific second messenger signals. The signals activate a diverse range of effectors, leading to bacterial cell death and thus abortive phage infection. A type III CBASS system. Expression of this CBASS system (Cap18-Cap6-Cap7-CdnC-CapW-Cap17) in a susceptible E.coli (strain MG1655) confers resistance to bacteriophage P1. Binds and disassembles an active CdnC:Cap7 complex, inhibiting the complex's ability to synthesize cyclic nucleotide second messengers. An AAA+-ATPase remodeler, in the absence of foreign threat Cap6 probably maintains the Cap7 protein in its open, inactive state. Once activated (presumably by a bacteriophage protein) Cap7 binds to and activates its cognate CD-NTase (CdnC in this bacteria) to synthesize a cyclic nucleotide second messenger which leads to abortive phage infection. This chain is CD-NTase-associated protein 6, found in Escherichia coli (strain KTE188).